The sequence spans 689 residues: Glycine--tRNA ligase beta subunit (689 aa).

Belongs to the class-II aminoacyl-tRNA synthetase family. Tetramer of two alpha and two beta subunits.

It localises to the cytoplasm. It catalyses the reaction tRNA(Gly) + glycine + ATP = glycyl-tRNA(Gly) + AMP + diphosphate. This chain is Glycine--tRNA ligase beta subunit, found in Pseudoalteromonas translucida (strain TAC 125).